Consider the following 420-residue polypeptide: L-rhamnose isomerase (420 aa).

Mn(2+) contacts are provided by His-264, Asp-296, and Asp-298.

Belongs to the rhamnose isomerase family. It depends on Mn(2+) as a cofactor.

It is found in the cytoplasm. It carries out the reaction L-rhamnopyranose = L-rhamnulose. The protein operates within carbohydrate degradation; L-rhamnose degradation; glycerone phosphate from L-rhamnose: step 1/3. Its function is as follows. Catalyzes the interconversion of L-rhamnose and L-rhamnulose. The chain is L-rhamnose isomerase from Listeria monocytogenes serovar 1/2a (strain ATCC BAA-679 / EGD-e).